The sequence spans 343 residues: Replication initiation protein (343 aa).

The disordered stretch occupies residues 42 to 61 (ERKRTKRRRGEHSTKPKCEN).

Probably functions as an initiator for the IncI1 ColIb-P9 replicon. The polypeptide is Replication initiation protein (repZ) (Escherichia coli).